The primary structure comprises 144 residues: Large ribosomal subunit protein uL15 (144 aa).

Residues 1 to 54 (MKLNTIKPAEGAKHARRRVGRGIGSGLGKTGGRGHKGQKSRAGGFHKVGFEGGQ) are disordered. Over residues 21 to 31 (RGIGSGLGKTG) the composition is skewed to gly residues.

It belongs to the universal ribosomal protein uL15 family. Part of the 50S ribosomal subunit.

In terms of biological role, binds to the 23S rRNA. The chain is Large ribosomal subunit protein uL15 from Methylobacillus flagellatus (strain ATCC 51484 / DSM 6875 / VKM B-1610 / KT).